The sequence spans 634 residues: Serine/threonine kinase NLK (634 aa).

The 292-residue stretch at 240 to 531 (SQPDRPIGYG…VEEALQHRYL (292 aa)) folds into the Protein kinase domain. Residues 246 to 254 (IGYGAFGVV) and Lys-269 each bind ATP. The active-site Proton acceptor is the Asp-366.

This sequence belongs to the protein kinase superfamily. CMGC Ser/Thr protein kinase family. MAP kinase subfamily. As to quaternary structure, component of the beta-catenin-lit-1 complex (also called the lit-1/wrm-1 complex or the wrm-1/lit-1 kinase complex) at least composed of lit-1 and wrm-1. Interacts with wrm-1 (via N-terminus); the interaction is direct and activates lit-1 kinase activity which leads to the phosphorylation of pop-1. This promotes pop-1 interaction with par-5 and translocation of pop-1 from the nucleus to the cytoplasm. Interacts with pop-1 (when phosphorylated on 'Ser-118' and 'Ser-127'); the interaction is dependent on the beta-catenin-lit-1 complex. The cofactor is Mg(2+). As to expression, expressed in the pharynx and seam and vulval cells.

The protein localises to the cytoplasm. The protein resides in the cell cortex. It is found in the nucleus. The catalysed reaction is L-seryl-[protein] + ATP = O-phospho-L-seryl-[protein] + ADP + H(+). It catalyses the reaction L-threonyl-[protein] + ATP = O-phospho-L-threonyl-[protein] + ADP + H(+). Has a role in the Wnt signaling pathway controlling the asymmetry of cell divisions during embryogenesis. Operates in the AB and EMS cell lineages influencing cell specification. Required for body wall muscle development, endoderm development, pop-1 asymmetry and T-cell division asymmetry. Component of the beta-catenin-lit-1 complex which promotes the phosphorylation, down-regulation and subcellular relocation of pop-1. Regulates plp-1 nuclear localization in embryos. Plays a role in male tail tip morphogenesis. The polypeptide is Serine/threonine kinase NLK (Caenorhabditis elegans).